The primary structure comprises 52 residues: MKTHVKKDLDKGWHMLIQEARSIGLGIHDVRQFLESETASRKKNHKKTVRQD.

The 38-residue stretch at 1–38 (MKTHVKKDLDKGWHMLIQEARSIGLGIHDVRQFLESET) folds into the Sin domain.

In terms of assembly, component of the SlrR/SlrA complex.

Functionally, required specifically for induction of eps and yqxM operons by antagonizing SinR. Regulates SlrR activity. Controls the initiation of biofilm formation. The sequence is that of Transcriptional regulator SlrA (slrA) from Bacillus subtilis (strain 168).